Here is an 89-residue protein sequence, read N- to C-terminus: Large ribosomal subunit protein bL27 (89 aa).

Residues 1–21 (MAHKKAGGSSRNGRDTEGRRL) form a disordered region.

This sequence belongs to the bacterial ribosomal protein bL27 family.

The sequence is that of Large ribosomal subunit protein bL27 from Granulibacter bethesdensis (strain ATCC BAA-1260 / CGDNIH1).